Here is a 306-residue protein sequence, read N- to C-terminus: Beta-lactamase (306 aa).

An N-terminal signal peptide occupies residues 1 to 36 (MKLKTKASIKFGICVGLLCLSITGFTPFFNSTHAEA). The active-site Acyl-ester intermediate is S89. A substrate-binding site is contributed by 251 to 253 (KSG).

This sequence belongs to the class-A beta-lactamase family.

It localises to the secreted. The catalysed reaction is a beta-lactam + H2O = a substituted beta-amino acid. In terms of biological role, this protein is a beta-lactamase with a substrate specificity for penicillins. The polypeptide is Beta-lactamase (penP) (Bacillus subtilis (strain 168)).